The following is a 254-amino-acid chain: Pyridoxine 5'-phosphate synthase (254 aa).

N12 contacts 3-amino-2-oxopropyl phosphate. Position 14–15 (14–15 (DH)) interacts with 1-deoxy-D-xylulose 5-phosphate. R23 lines the 3-amino-2-oxopropyl phosphate pocket. The active-site Proton acceptor is H48. R50 and H55 together coordinate 1-deoxy-D-xylulose 5-phosphate. E75 functions as the Proton acceptor in the catalytic mechanism. T105 contacts 1-deoxy-D-xylulose 5-phosphate. The Proton donor role is filled by H199. 3-amino-2-oxopropyl phosphate contacts are provided by residues G200 and 221–222 (GF).

It belongs to the PNP synthase family. Homooctamer; tetramer of dimers.

The protein resides in the cytoplasm. The enzyme catalyses 3-amino-2-oxopropyl phosphate + 1-deoxy-D-xylulose 5-phosphate = pyridoxine 5'-phosphate + phosphate + 2 H2O + H(+). Its pathway is cofactor biosynthesis; pyridoxine 5'-phosphate biosynthesis; pyridoxine 5'-phosphate from D-erythrose 4-phosphate: step 5/5. Catalyzes the complicated ring closure reaction between the two acyclic compounds 1-deoxy-D-xylulose-5-phosphate (DXP) and 3-amino-2-oxopropyl phosphate (1-amino-acetone-3-phosphate or AAP) to form pyridoxine 5'-phosphate (PNP) and inorganic phosphate. This chain is Pyridoxine 5'-phosphate synthase, found in Rhodopseudomonas palustris (strain TIE-1).